Reading from the N-terminus, the 338-residue chain is UPF0324 membrane protein HI_1643 (338 aa).

A run of 10 helical transmembrane segments spans residues 5 to 23 (PFYF…ANYL), 33 to 55 (HISA…YPQF), 62 to 84 (GVLF…RLTF), 94 to 116 (AVVT…GIRY), 123 to 145 (LVYL…AEPV), 155 to 177 (VAIA…FYTW), 222 to 239 (LRVM…WLLT), 254 to 273 (IPWF…FDLL), 280 to 302 (LFVE…TTQA), and 312 to 334 (PLVL…NYGI).

Belongs to the UPF0324 family.

It is found in the cell membrane. The protein is UPF0324 membrane protein HI_1643 of Haemophilus influenzae (strain ATCC 51907 / DSM 11121 / KW20 / Rd).